A 262-amino-acid polypeptide reads, in one-letter code: Phosphatase SCO2771 (262 aa).

In terms of biological role, displays phosphatase activity against p-nitrophenyl phosphate (pNPP) in vitro; however, the physiological substrate is unknown. This Streptomyces coelicolor (strain ATCC BAA-471 / A3(2) / M145) protein is Phosphatase SCO2771.